We begin with the raw amino-acid sequence, 215 residues long: ATP phosphoribosyltransferase (215 aa).

The protein belongs to the ATP phosphoribosyltransferase family. Short subfamily. In terms of assembly, heteromultimer composed of HisG and HisZ subunits.

It is found in the cytoplasm. The enzyme catalyses 1-(5-phospho-beta-D-ribosyl)-ATP + diphosphate = 5-phospho-alpha-D-ribose 1-diphosphate + ATP. It functions in the pathway amino-acid biosynthesis; L-histidine biosynthesis; L-histidine from 5-phospho-alpha-D-ribose 1-diphosphate: step 1/9. Its function is as follows. Catalyzes the condensation of ATP and 5-phosphoribose 1-diphosphate to form N'-(5'-phosphoribosyl)-ATP (PR-ATP). Has a crucial role in the pathway because the rate of histidine biosynthesis seems to be controlled primarily by regulation of HisG enzymatic activity. The chain is ATP phosphoribosyltransferase from Prochlorococcus marinus subsp. pastoris (strain CCMP1986 / NIES-2087 / MED4).